The following is a 296-amino-acid chain: Sulfotransferase 1C2 (296 aa).

49-54 (KSGTTW) is a binding site for 3'-phosphoadenylyl sulfate. Position 107–109 (107–109 (RTH)) interacts with substrate. The Proton acceptor role is filled by His-109. Residues Arg-131, Ser-139, Tyr-194, and 228-233 (TSFEKM) each bind 3'-phosphoadenylyl sulfate. A Phosphoserine modification is found at Ser-139. At Ser-254 the chain carries Phosphoserine. 256–260 (FMRKG) is a binding site for 3'-phosphoadenylyl sulfate.

Belongs to the sulfotransferase 1 family. As to expression, highly expressed in kidney and at lower levels in stomach and liver. More specifically found in the epithelia of proximal tubules of the kidney, of the bile duct, of the gastric mucosa, and in hepatocytes.

The protein localises to the cytoplasm. Its subcellular location is the lysosome. The protein resides in the mitochondrion. The catalysed reaction is a phenol + 3'-phosphoadenylyl sulfate = an aryl sulfate + adenosine 3',5'-bisphosphate + H(+). The enzyme catalyses cholesterol + 3'-phosphoadenylyl sulfate = cholesterol sulfate + adenosine 3',5'-bisphosphate + H(+). Sulfotransferase that utilizes 3'-phospho-5'-adenylyl sulfate (PAPS) to catalyze the sulfate conjugation of phenolic compounds. Does not transfer sulfate to steroids, dopamine, acetaminophen, or alpha-naphthol. Except in mitochondria, where it can add sulfate to cholesterol producing cholesterol sulfate, which alters mitochondrial membrane organization, and impacts protein complex mobility increasing state-III respiration, thereby modulating mitochondrial respiration. Catalyzes the sulfation of the carcinogenic N-hydroxy-2-acetylaminofluorene leading to highly reactive intermediates capable of forming DNA adducts, potentially resulting in mutagenesis. The polypeptide is Sulfotransferase 1C2 (Sult1c2) (Rattus norvegicus (Rat)).